A 671-amino-acid polypeptide reads, in one-letter code: Protein KHNYN (671 aa).

Disordered regions lie at residues 234–274, 294–327, 344–402, and 577–626; these read RVAG…LSGE, EVAP…AHVP, HNGS…GGNL, and GPTL…RKTR. Basic and acidic residues predominate over residues 250–272; the sequence is TVEKEERKQDAVRDMGSGRKELS. Over residues 351–365 the composition is skewed to pro residues; sequence PRVPSPPPAPEPPWP. The residue at position 355 (S355) is a Phosphoserine. The segment covering 367-381 has biased composition (basic and acidic residues); that stretch reads GDRDRDRDRGDRGDK. The RNase NYN domain maps to 430–582; the sequence is LRHIVIDGSN…LGRNGPTLDE (153 aa). Over residues 591–612 the composition is skewed to polar residues; that stretch reads QGSSKTQQPSKGSTEQANQQQG.

It belongs to the N4BP1 family.

The chain is Protein KHNYN (Khnyn) from Mus musculus (Mouse).